Here is a 1290-residue protein sequence, read N- to C-terminus: Alpha-factor-transporting ATPase (1290 aa).

Residues 1–25 are Cytoplasmic-facing; sequence MNFLSFKTTKHYHIFRYVNIRNDYR. A helical membrane pass occupies residues 26-46; it reads LLMIMIIGTVATGLVPAITSI. The 293-residue stretch at 27-319 folds into the ABC transmembrane type-1 1 domain; that stretch reads LMIMIIGTVA…TLHQIVVLQK (293 aa). The Extracellular segment spans residues 47-75; it reads LTGRVFDLLSVFVANGSHQGLYSQLVQRS. Residue Asn61 is glycosylated (N-linked (GlcNAc...) asparagine). A helical membrane pass occupies residues 76–96; sequence MAVMALGAASVPVMWLSLTSW. The Cytoplasmic segment spans residues 97–150; sequence MHIGERQGFRIRSQILEAYLEEKPMEWYDNNEKLLGDFTQINRCVEELRSSSAE. A helical transmembrane segment spans residues 151–171; it reads ASAITFQNLVAICALLGTSFY. Residues 172–173 are Extracellular-facing; it reads YS. The helical transmembrane segment at 174–194 threads the bilayer; sequence WSLTLIILCSSPIITFFAVVF. Over 195–262 the chain is Cytoplasmic; the sequence is SRMIHVYSEK…SCFFVAANAG (68 aa). A helical membrane pass occupies residues 263-283; sequence ILRFLTLTMFVQGFWFGSAMI. The Extracellular portion of the chain corresponds to 284-296; that stretch reads KKGKLNINDVITC. The helical transmembrane segment at 297–317 threads the bilayer; sequence FHSCIMLGSTLNNTLHQIVVL. Residues 318–715 lie on the Cytoplasmic side of the membrane; sequence QKGGVAMEKI…RMIKSIRYKK (398 aa). The region spanning 357-603 is the ABC transporter 1 domain; the sequence is LTFANVSFSY…PTTTFSTWYH (247 aa). Residue 392 to 399 coordinates ATP; sequence GKSGSGKS. Residues 716 to 736 traverse the membrane as a helical segment; sequence ILILGLLCSLIAGATNPVFSY. One can recognise an ABC transmembrane type-1 2 domain in the interval 717–1007; sequence LILGLLCSLI…LVSQIPDISR (291 aa). Residues 737–763 lie on the Extracellular side of the membrane; that stretch reads TFSFLLEGIVPSTDGKTGSSHYLAKWS. Residues 764-784 traverse the membrane as a helical segment; it reads LLVLGVAAADGIFNFAKGFLL. Residues 785–838 lie on the Cytoplasmic side of the membrane; it reads DCCSEYWVMDLRNEVMEKLTRKNMDWFSGENNKASEISALVLNDLRDLRSLVSE. The chain crosses the membrane as a helical span at residues 839–859; the sequence is FLSAMTSFVTVSTIGLIWALV. The Extracellular segment spans residues 860–865; sequence SGWKLS. Residues 866–886 form a helical membrane-spanning segment; sequence LVCISMFPLIIIFSAIYGGIL. Residues 887-945 lie on the Cytoplasmic side of the membrane; sequence QKCETDYKTSVAQLENCLYQIVTNIKTIKCLQAEFHFQLTYHDLKIKMQQIASKRAIAT. Residues 946–966 traverse the membrane as a helical segment; the sequence is GFGISMTNMIVMCIQAIIYYY. The Extracellular portion of the chain corresponds to 967 to 981; the sequence is GLKLVMIHEYTSKEM. A helical transmembrane segment spans residues 982 to 1002; the sequence is FTTFTLLLFTIMSCTSLVSQI. Residues 1003-1290 are Cytoplasmic-facing; the sequence is PDISRGQRAA…LFQIVSNQSS (288 aa). A Glycyl lysine isopeptide (Lys-Gly) (interchain with G-Cter in ubiquitin) cross-link involves residue Lys1022. Residues 1052 to 1287 enclose the ABC transporter 2 domain; that stretch reads VSIQNLTFAY…RGELFQIVSN (236 aa). ATP is bound at residue 1087–1094; it reads GESGTGKS.

Belongs to the ABC transporter superfamily. Alpha-factor sex pheromone exporter (TC 3.A.1.206) family. Post-translationally, degraded via the ubiquitin system.

The protein resides in the membrane. The enzyme catalyses an [alpha-factor](in) + ATP + H2O = an [alpha-factor](out) + ADP + phosphate + H(+). Functionally, STE6 is required in yeast MATA cells for production of A-factor pheromone. STE6 is involved in the transport of the farnesyl-derivation of the A-factor pheromone. In Saccharomyces cerevisiae (strain ATCC 204508 / S288c) (Baker's yeast), this protein is Alpha-factor-transporting ATPase (STE6).